The following is a 74-amino-acid chain: MGNEFRVCDDCQATNVKTLIPKLKKVDSCATIEVACQSYCGPGRKKSFAFVNNRPVAAPTEDELIVKIEAKLNK.

Belongs to the UPF0741 family.

In Bacillus mycoides (strain KBAB4) (Bacillus weihenstephanensis), this protein is UPF0741 protein BcerKBAB4_5177.